A 136-amino-acid polypeptide reads, in one-letter code: Aspartate 1-decarboxylase (136 aa).

The active-site Schiff-base intermediate with substrate; via pyruvic acid is serine 25. Serine 25 carries the pyruvic acid (Ser) modification. Residue threonine 57 participates in substrate binding. Residue tyrosine 58 is the Proton donor of the active site. 73–75 (GAA) contacts substrate. The segment at 117–136 (IFQLGEETTPEEAPSLEQRN) is disordered.

Belongs to the PanD family. In terms of assembly, heterooctamer of four alpha and four beta subunits. Pyruvate is required as a cofactor. Is synthesized initially as an inactive proenzyme, which is activated by self-cleavage at a specific serine bond to produce a beta-subunit with a hydroxyl group at its C-terminus and an alpha-subunit with a pyruvoyl group at its N-terminus.

It localises to the cytoplasm. The catalysed reaction is L-aspartate + H(+) = beta-alanine + CO2. It functions in the pathway cofactor biosynthesis; (R)-pantothenate biosynthesis; beta-alanine from L-aspartate: step 1/1. Its function is as follows. Catalyzes the pyruvoyl-dependent decarboxylation of aspartate to produce beta-alanine. The protein is Aspartate 1-decarboxylase of Chloroherpeton thalassium (strain ATCC 35110 / GB-78).